Reading from the N-terminus, the 88-residue chain is Large ribosomal subunit protein bL27 (88 aa).

The disordered stretch occupies residues 1-24 (MATKKSGGSSGNGRDSRGRRLGVK).

This sequence belongs to the bacterial ribosomal protein bL27 family.

The polypeptide is Large ribosomal subunit protein bL27 (Ehrlichia canis (strain Jake)).